A 329-amino-acid chain; its full sequence is Strigolactones hydrolase CXE15 (329 aa).

Residues 83–85 carry the Involved in the stabilization of the negatively charged intermediate by the formation of the oxyanion hole motif; the sequence is HGG. 4 residues coordinate (-)-2'-epi-GR24: G85, G86, S169, and S170. The active-site Nucleophile is the S169. Catalysis depends on residues E271 and H302.

The protein belongs to the 'GDXG' lipolytic enzyme family. In terms of tissue distribution, expressed in axillary buds, leaves, stems, hypocotyls, flowers, siliques, and vasculatures of shoots and roots.

Its subcellular location is the nucleus. The protein resides in the cytoplasm. It is found in the cytosol. The enzyme catalyses (-)-2'-epi-GR24 + H2O = (-)-2'-epi-GR24 ABC-rings + 5-hydroxy-3-methylfuran-2(5H)-one. The catalysed reaction is 5-deoxystrigol + H2O = 5-deoxystrigol ABC-rings + 5-hydroxy-3-methylfuran-2(5H)-one. It carries out the reaction orobanchol + H2O = orobanchol ABC-rings + 5-hydroxy-3-methylfuran-2(5H)-one. Its function is as follows. Binds to strigolactones (SLs) such as (-)-2'-epi-GR24(4DO), 5-deoxystrigol (5DS) and orobanchol, and catalyzes their hydrolysis; SL are phytohormones controlling shoot branching and communications between plants and microorganisms. Promotes shoot branching by dampening SL-inhibited axillary bud outgrowth. The sequence is that of Strigolactones hydrolase CXE15 from Arabidopsis thaliana (Mouse-ear cress).